The following is a 197-amino-acid chain: dTTP/UTP pyrophosphatase (197 aa).

D69 acts as the Proton acceptor in catalysis.

It belongs to the Maf family. YhdE subfamily. The cofactor is a divalent metal cation.

The protein resides in the cytoplasm. It catalyses the reaction dTTP + H2O = dTMP + diphosphate + H(+). It carries out the reaction UTP + H2O = UMP + diphosphate + H(+). Its function is as follows. Nucleoside triphosphate pyrophosphatase that hydrolyzes dTTP and UTP. May have a dual role in cell division arrest and in preventing the incorporation of modified nucleotides into cellular nucleic acids. The protein is dTTP/UTP pyrophosphatase of Lachnoclostridium phytofermentans (strain ATCC 700394 / DSM 18823 / ISDg) (Clostridium phytofermentans).